The sequence spans 158 residues: SsrA-binding protein (158 aa).

Residues 135-158 are disordered; that stretch reads DKRKTLKDRDWERDKQRGFKKDLD. A compositionally biased stretch (basic and acidic residues) spans 141-158; it reads KDRDWERDKQRGFKKDLD.

It belongs to the SmpB family.

The protein resides in the cytoplasm. Its function is as follows. Required for rescue of stalled ribosomes mediated by trans-translation. Binds to transfer-messenger RNA (tmRNA), required for stable association of tmRNA with ribosomes. tmRNA and SmpB together mimic tRNA shape, replacing the anticodon stem-loop with SmpB. tmRNA is encoded by the ssrA gene; the 2 termini fold to resemble tRNA(Ala) and it encodes a 'tag peptide', a short internal open reading frame. During trans-translation Ala-aminoacylated tmRNA acts like a tRNA, entering the A-site of stalled ribosomes, displacing the stalled mRNA. The ribosome then switches to translate the ORF on the tmRNA; the nascent peptide is terminated with the 'tag peptide' encoded by the tmRNA and targeted for degradation. The ribosome is freed to recommence translation, which seems to be the essential function of trans-translation. In Psychrobacter arcticus (strain DSM 17307 / VKM B-2377 / 273-4), this protein is SsrA-binding protein.